Consider the following 347-residue polypeptide: Protein RecA (347 aa).

65–72 (GPESSGKT) provides a ligand contact to ATP.

The protein belongs to the RecA family.

It is found in the cytoplasm. In terms of biological role, can catalyze the hydrolysis of ATP in the presence of single-stranded DNA, the ATP-dependent uptake of single-stranded DNA by duplex DNA, and the ATP-dependent hybridization of homologous single-stranded DNAs. It interacts with LexA causing its activation and leading to its autocatalytic cleavage. The chain is Protein RecA from Stutzerimonas stutzeri (Pseudomonas stutzeri).